Consider the following 170-residue polypeptide: UPF0260 protein Rpal_2074 (170 aa).

This sequence belongs to the UPF0260 family.

This chain is UPF0260 protein Rpal_2074, found in Rhodopseudomonas palustris (strain TIE-1).